Consider the following 96-residue polypeptide: 2Fe-2S ferredoxin-5 (96 aa).

The 2Fe-2S ferredoxin-type domain occupies 2–96; the sequence is PKVIVANINA…GKGDVVIYLP (95 aa). Residues Cys36, Cys42, Cys45, and Cys81 each contribute to the [2Fe-2S] cluster site.

It belongs to the adrenodoxin/putidaredoxin family. It depends on [2Fe-2S] cluster as a cofactor.

In terms of biological role, may be involved in the assembly of iron-sulfur clusters (Isc-Fd). The protein is 2Fe-2S ferredoxin-5 (fdx5) of Aquifex aeolicus (strain VF5).